The chain runs to 517 residues: Crotonobetaine/carnitine--CoA ligase (517 aa).

This sequence belongs to the ATP-dependent AMP-binding enzyme family.

The catalysed reaction is 4-(trimethylamino)butanoate + ATP + CoA = 4-(trimethylamino)butanoyl-CoA + AMP + diphosphate. The enzyme catalyses crotonobetaine + ATP + CoA = crotonobetainyl-CoA + AMP + diphosphate. It carries out the reaction (R)-carnitine + ATP + CoA = (R)-carnitinyl-CoA + AMP + diphosphate. It participates in amine and polyamine metabolism; carnitine metabolism. Its function is as follows. Catalyzes the transfer of CoA to carnitine, generating the initial carnitinyl-CoA needed for the CaiB reaction cycle. Also has activity toward crotonobetaine and gamma-butyrobetaine. The polypeptide is Crotonobetaine/carnitine--CoA ligase (Escherichia coli O8 (strain IAI1)).